We begin with the raw amino-acid sequence, 407 residues long: MQTFLKGKRVGYWLSEKKIRKLNFQAFAELCRKRGVEVVQLDLTKPIEDQGPLDVIIHKLTDVILEADQNDSQSLELVQRFQEYIDAHPETIILDPLPAIRTLLDRSKSYELIRQIEAYMQDERICSPPFMELTSACGEDTLQLIEKNGLAFPFICKTRVAHGTNSHEMAIIFNQEGLKAVRPPCVIQSFINHNAVLYKVFVVGESYTVVKRPSLKNFSAGISDRESIFFNSHNVSKPESSSVLTALDKIEGVFERPDDDVIREISKALRQALGVSLFGIDIIINNQTGQHAVIDINAFPGYEGVSEFFTDLLNHIAAVLQGQAPEVTQLNRSKLLAEQTGGIMDERICCASTGCISVMGKDSSWIVESETNSSVKLQHQRLGCNSAVSPSFQQHCVATLATKASSQ.

Position 18 (Lys-18) interacts with 1D-myo-inositol 1,3,4-trisphosphate. ATP-binding residues include Arg-106 and Lys-157. One can recognise an ATP-grasp domain in the interval 117–341 (EAYMQDERIC…RSKLLAEQTG (225 aa)). 1D-myo-inositol 1,3,4-trisphosphate contacts are provided by His-167 and Lys-199. ATP contacts are provided by residues 188 to 199 (QSFINHNAVLYK), Ser-214, Ser-232, and Ser-236. Residues Asp-281, Asp-295, and Asn-297 each contribute to the Mg(2+) site. Residue Asn-297 participates in 1D-myo-inositol 1,3,4-trisphosphate binding.

This sequence belongs to the ITPK1 family. Monomer. Requires Mg(2+) as cofactor.

The enzyme catalyses 1D-myo-inositol 3,4,5,6-tetrakisphosphate + ATP = 1D-myo-inositol 1,3,4,5,6-pentakisphosphate + ADP + H(+). It carries out the reaction 1D-myo-inositol 1,3,4-trisphosphate + ATP = 1D-myo-inositol 1,3,4,5-tetrakisphosphate + ADP + H(+). The catalysed reaction is 1D-myo-inositol 1,3,4-trisphosphate + ATP = 1D-myo-inositol 1,3,4,6-tetrakisphosphate + ADP + H(+). It catalyses the reaction 1D-myo-inositol 3,4,6-trisphosphate + ATP = 1D-myo-inositol 1,3,4,6-tetrakisphosphate + ADP + H(+). The enzyme catalyses 1D-myo-inositol 1,3,4-trisphosphate + 1D-myo-inositol 1,3,4,5,6-pentakisphosphate = 1D-myo-inositol 3,4,5,6-tetrakisphosphate + 1D-myo-inositol 1,3,4,6-tetrakisphosphate. It carries out the reaction 1D-myo-inositol 1,3,4-trisphosphate + 1D-myo-inositol 1,3,4,5,6-pentakisphosphate = 1D-myo-inositol 3,4,5,6-tetrakisphosphate + 1D-myo-inositol 1,3,4,5-tetrakisphosphate. Kinase that can phosphorylate various inositol polyphosphate such as Ins(3,4,5,6)P4 or Ins(1,3,4)P3. Phosphorylates Ins(3,4,5,6)P4 at position 1 to form Ins(1,3,4,5,6)P5. This reaction is thought to have regulatory importance, since Ins(3,4,5,6)P4 is an inhibitor of plasma membrane Ca(2+)-activated Cl(-) channels, while Ins(1,3,4,5,6)P5 is not. Also phosphorylates Ins(1,3,4)P3 on O-5 and O-6 to form Ins(1,3,4,6)P4, an essential molecule in the hexakisphosphate (InsP6) pathway. Also acts as an inositol polyphosphate phosphatase that dephosphorylates Ins(1,3,4,5)P4 and Ins(1,3,4,6)P4 to Ins(1,3,4)P3, and Ins(1,3,4,5,6)P5 to Ins(3,4,5,6)P4. May also act as an isomerase that interconverts the inositol tetrakisphosphate isomers Ins(1,3,4,5)P4 and Ins(1,3,4,6)P4 in the presence of ADP and magnesium. Probably acts as the rate-limiting enzyme of the InsP6 pathway. Modifies TNF-alpha-induced apoptosis by interfering with the activation of TNFRSF1A-associated death domain. Plays an important role in MLKL-mediated necroptosis. Produces highly phosphorylated inositol phosphates such as inositolhexakisphosphate (InsP6) which bind to MLKL mediating the release of an N-terminal auto-inhibitory region leading to its activation. Essential for activated phospho-MLKL to oligomerize and localize to the cell membrane during necroptosis. The polypeptide is Inositol-tetrakisphosphate 1-kinase (ITPK1) (Gallus gallus (Chicken)).